The sequence spans 175 residues: Cytochrome c6, chloroplastic (175 aa).

Residues Cys86, Cys89, and His90 each contribute to the heme c site. Gln98–Thr102 provides a ligand contact to heme. Heme c is bound at residue Met130.

It belongs to the cytochrome c family. PetJ subfamily. Monomer. Interacts in vitro with LTO1. Post-translationally, binds 1 heme c group covalently per subunit.

Its subcellular location is the plastid. The protein localises to the chloroplast thylakoid lumen. Its function is as follows. Functions as an electron carrier between membrane-bound cytochrome b6-f and photosystem I in oxygenic photosynthesis. The sequence is that of Cytochrome c6, chloroplastic (PETJ) from Arabidopsis thaliana (Mouse-ear cress).